We begin with the raw amino-acid sequence, 507 residues long: Maturase K (507 aa).

This sequence belongs to the intron maturase 2 family. MatK subfamily.

The protein resides in the plastid. Its subcellular location is the chloroplast. Its function is as follows. Usually encoded in the trnK tRNA gene intron. Probably assists in splicing its own and other chloroplast group II introns. This is Maturase K from Liriodendron tulipifera (Tuliptree).